Here is a 468-residue protein sequence, read N- to C-terminus: Siroheme synthase (468 aa).

The tract at residues 1-203 is precorrin-2 dehydrogenase /sirohydrochlorin ferrochelatase; the sequence is MQYLPIFLNI…GQEEEAEGAL (203 aa). Residues 22–23 and 43–44 contribute to the NAD(+) site; these read TV and PK. Residue S128 is modified to Phosphoserine. Positions 216–468 are uroporphyrinogen-III C-methyltransferase; sequence GEVYLVGAGP…VPDREPLDAR (253 aa). P225 is an S-adenosyl-L-methionine binding site. The active-site Proton acceptor is the D248. K270 serves as the catalytic Proton donor. S-adenosyl-L-methionine is bound by residues 301 to 303, I306, 331 to 332, M383, and G412; these read GGD and TA.

It in the N-terminal section; belongs to the precorrin-2 dehydrogenase / sirohydrochlorin ferrochelatase family. In the C-terminal section; belongs to the precorrin methyltransferase family.

It catalyses the reaction uroporphyrinogen III + 2 S-adenosyl-L-methionine = precorrin-2 + 2 S-adenosyl-L-homocysteine + H(+). It carries out the reaction precorrin-2 + NAD(+) = sirohydrochlorin + NADH + 2 H(+). The enzyme catalyses siroheme + 2 H(+) = sirohydrochlorin + Fe(2+). It functions in the pathway cofactor biosynthesis; adenosylcobalamin biosynthesis; precorrin-2 from uroporphyrinogen III: step 1/1. The protein operates within cofactor biosynthesis; adenosylcobalamin biosynthesis; sirohydrochlorin from precorrin-2: step 1/1. It participates in porphyrin-containing compound metabolism; siroheme biosynthesis; precorrin-2 from uroporphyrinogen III: step 1/1. Its pathway is porphyrin-containing compound metabolism; siroheme biosynthesis; siroheme from sirohydrochlorin: step 1/1. It functions in the pathway porphyrin-containing compound metabolism; siroheme biosynthesis; sirohydrochlorin from precorrin-2: step 1/1. Functionally, multifunctional enzyme that catalyzes the SAM-dependent methylations of uroporphyrinogen III at position C-2 and C-7 to form precorrin-2 via precorrin-1. Then it catalyzes the NAD-dependent ring dehydrogenation of precorrin-2 to yield sirohydrochlorin. Finally, it catalyzes the ferrochelation of sirohydrochlorin to yield siroheme. This chain is Siroheme synthase, found in Nitrosococcus oceani (strain ATCC 19707 / BCRC 17464 / JCM 30415 / NCIMB 11848 / C-107).